The following is a 920-amino-acid chain: Coatomer subunit beta'-1 (920 aa).

8 WD repeats span residues 13-52, 55-94, 97-136, 140-180, 183-224, 227-266, 350-392, and 460-500; these read QRSERVKSVDLHPTEPWILASLYSGTLCIWNYQTQTMVKS, VTELPVRSAKFIARKQWVVAGADDMFIRVYNYNTMDKIKV, AHADYIRCVAVHPTLPYVLSSSDDMLIKLWDWEKGWLCTQ, GHSH…PNFT, AHLK…CVQT, GHTHNVSAVSFHPELPIIITGSEDGTVRIWHATTYRLENT, TCDL…GSAL, and RIDV…SYFD. Residues 850-920 are disordered; sequence LEQGDVLDEV…EQWVLTPPQE (71 aa). Positions 854–875 are enriched in acidic residues; sequence DVLDEVGEEGEDGEEEEEEDRQ.

The protein belongs to the WD repeat COPB2 family. As to quaternary structure, oligomeric complex that consists of at least the alpha, beta, beta', gamma, delta, epsilon and zeta subunits.

The protein resides in the cytoplasm. Its subcellular location is the golgi apparatus membrane. It is found in the cytoplasmic vesicle. It localises to the COPI-coated vesicle membrane. In terms of biological role, the coatomer is a cytosolic protein complex that binds to dilysine motifs and reversibly associates with Golgi non-clathrin-coated vesicles, which further mediate biosynthetic protein transport from the ER, via the Golgi up to the trans Golgi network. Coatomer complex is required for budding from Golgi membranes, and is essential for the retrograde Golgi-to-ER transport of dilysine-tagged proteins. The chain is Coatomer subunit beta'-1 from Arabidopsis thaliana (Mouse-ear cress).